Reading from the N-terminus, the 61-residue chain is Large ribosomal subunit protein uL29 (61 aa).

This sequence belongs to the universal ribosomal protein uL29 family.

This Campylobacter lari (strain RM2100 / D67 / ATCC BAA-1060) protein is Large ribosomal subunit protein uL29.